A 347-amino-acid polypeptide reads, in one-letter code: Haptoglobin (347 aa).

An N-terminal signal peptide occupies residues 1 to 18; the sequence is MSALGAVIALLLWGQLFA. Residues 31 to 88 enclose the Sushi domain; sequence DGCPKPPEIANGYVEHLVRYQCKKYYRLRTEGDGVYTLNNEKQWTNKAVGDKLPECEA. 4 cysteine pairs are disulfide-bonded: C52–C86, C90–C207, C250–C281, and C292–C322. The region spanning 103–345 is the Peptidase S1 domain; that stretch reads ILGGHLDAKG…IQDWVQKTIA (243 aa). N-linked (GlcNAc...) asparagine glycosylation is found at N125, N148, N152, and N182. An interaction with CD163 region spans residues 259–264; sequence VPEKKT.

This sequence belongs to the peptidase S1 family. As to quaternary structure, tetramer of two alpha and two beta chains; disulfide-linked. The hemoglobin/haptoglobin complex is composed of a haptoglobin dimer bound to two hemoglobin alpha-beta dimers. Interacts with CD163. Interacts with ERGIC3. In terms of tissue distribution, expressed by the liver and secreted in plasma.

Its subcellular location is the secreted. As a result of hemolysis, hemoglobin is found to accumulate in the kidney and is secreted in the urine. Haptoglobin captures, and combines with free plasma hemoglobin to allow hepatic recycling of heme iron and to prevent kidney damage. Haptoglobin also acts as an antioxidant, has antibacterial activity and plays a role in modulating many aspects of the acute phase response. Hemoglobin/haptoglobin complexes are rapidly cleared by the macrophage CD163 scavenger receptor expressed on the surface of liver Kupfer cells through an endocytic lysosomal degradation pathway. The polypeptide is Haptoglobin (HP) (Ateles geoffroyi (Black-handed spider monkey)).